The sequence spans 562 residues: Restriction of telomere capping protein 5 (562 aa).

Positions 1–21 (MGQTPSVESQESKETKNEMPE) are disordered. Residues 10–21 (QESKETKNEMPE) are compositionally biased toward basic and acidic residues. Residues 283–509 (KLMTYPLVAQ…IRDVEVWGCG (227 aa)) enclose the TLDc domain.

This sequence belongs to the RTC5 family.

It localises to the cytoplasm. Functionally, may be involved in a process influencing telomere capping. This is Restriction of telomere capping protein 5 (RTC5) from Vanderwaltozyma polyspora (strain ATCC 22028 / DSM 70294 / BCRC 21397 / CBS 2163 / NBRC 10782 / NRRL Y-8283 / UCD 57-17) (Kluyveromyces polysporus).